Consider the following 122-residue polypeptide: Large ribosomal subunit protein uL14 (122 aa).

It belongs to the universal ribosomal protein uL14 family. As to quaternary structure, part of the 50S ribosomal subunit. Forms a cluster with proteins L3 and L19. In the 70S ribosome, L14 and L19 interact and together make contacts with the 16S rRNA in bridges B5 and B8.

Binds to 23S rRNA. Forms part of two intersubunit bridges in the 70S ribosome. The sequence is that of Large ribosomal subunit protein uL14 from Pelodictyon phaeoclathratiforme (strain DSM 5477 / BU-1).